A 360-amino-acid chain; its full sequence is Putative F-box protein At3g16210 (360 aa).

Positions Met1–Met48 constitute an F-box domain.

This chain is Putative F-box protein At3g16210, found in Arabidopsis thaliana (Mouse-ear cress).